The following is a 150-amino-acid chain: D-aminoacyl-tRNA deacylase (150 aa).

Residues 136 to 137 (GP) carry the Gly-cisPro motif, important for rejection of L-amino acids motif.

Belongs to the DTD family. Homodimer.

The protein localises to the cytoplasm. The enzyme catalyses glycyl-tRNA(Ala) + H2O = tRNA(Ala) + glycine + H(+). The catalysed reaction is a D-aminoacyl-tRNA + H2O = a tRNA + a D-alpha-amino acid + H(+). In terms of biological role, an aminoacyl-tRNA editing enzyme that deacylates mischarged D-aminoacyl-tRNAs. Also deacylates mischarged glycyl-tRNA(Ala), protecting cells against glycine mischarging by AlaRS. Acts via tRNA-based rather than protein-based catalysis; rejects L-amino acids rather than detecting D-amino acids in the active site. By recycling D-aminoacyl-tRNA to D-amino acids and free tRNA molecules, this enzyme counteracts the toxicity associated with the formation of D-aminoacyl-tRNA entities in vivo and helps enforce protein L-homochirality. The polypeptide is D-aminoacyl-tRNA deacylase (Staphylococcus aureus (strain Mu50 / ATCC 700699)).